Here is a 423-residue protein sequence, read N- to C-terminus: Serine hydroxymethyltransferase (423 aa).

(6S)-5,6,7,8-tetrahydrofolate-binding positions include leucine 126 and 130 to 132 (GHL). The residue at position 235 (lysine 235) is an N6-(pyridoxal phosphate)lysine.

Belongs to the SHMT family. In terms of assembly, homodimer. Pyridoxal 5'-phosphate serves as cofactor.

The protein localises to the cytoplasm. It catalyses the reaction (6R)-5,10-methylene-5,6,7,8-tetrahydrofolate + glycine + H2O = (6S)-5,6,7,8-tetrahydrofolate + L-serine. The protein operates within one-carbon metabolism; tetrahydrofolate interconversion. It functions in the pathway amino-acid biosynthesis; glycine biosynthesis; glycine from L-serine: step 1/1. Functionally, catalyzes the reversible interconversion of serine and glycine with tetrahydrofolate (THF) serving as the one-carbon carrier. This reaction serves as the major source of one-carbon groups required for the biosynthesis of purines, thymidylate, methionine, and other important biomolecules. Also exhibits THF-independent aldolase activity toward beta-hydroxyamino acids, producing glycine and aldehydes, via a retro-aldol mechanism. The polypeptide is Serine hydroxymethyltransferase (Sorangium cellulosum (strain So ce56) (Polyangium cellulosum (strain So ce56))).